Reading from the N-terminus, the 356-residue chain is Serendipity locus protein beta (356 aa).

Residues 171-193 (IPCHICGEMFSSQEVLERHIKAD) form a C2H2-type 1; degenerate zinc finger. C2H2-type zinc fingers lie at residues 201–223 (ATCN…MNLH), 229–251 (LECR…MEVH), 257–279 (YQCD…LMRH), 286–308 (LICE…LRTH), and 315–337 (YPCP…KRVH).

As to quaternary structure, binds chromatin; requires N-terminal regions to form protein-protein contacts, in addition to DNA specific recognition by the zinc fingers.

It localises to the nucleus. In terms of biological role, binds to the consensus DNA sequence 5'-YCAGAGATGCGCA-3'. The protein is Serendipity locus protein beta (Sry-beta) of Drosophila melanogaster (Fruit fly).